The chain runs to 829 residues: Translation initiation factor IF-2 (829 aa).

The span at 128 to 137 (QNAEEEKVEA) shows a compositional bias: basic and acidic residues. The disordered stretch occupies residues 128–157 (QNAEEEKVEASAKTVQNNEDIQPQTSKKKE). The span at 140-152 (KTVQNNEDIQPQT) shows a compositional bias: polar residues. The region spanning 327–497 (TRAPVVTVMG…LLIAEMQDLK (171 aa)) is the tr-type G domain. A G1 region spans residues 336–343 (GHVDHGKT). 336-343 (GHVDHGKT) serves as a coordination point for GTP. Residues 361–365 (GITQH) form a G2 region. Residues 383-386 (DTPG) are G3. Residues 383-387 (DTPGH) and 437-440 (NKID) contribute to the GTP site. Residues 437–440 (NKID) form a G4 region. The segment at 473–475 (SAL) is G5.

This sequence belongs to the TRAFAC class translation factor GTPase superfamily. Classic translation factor GTPase family. IF-2 subfamily.

It localises to the cytoplasm. One of the essential components for the initiation of protein synthesis. Protects formylmethionyl-tRNA from spontaneous hydrolysis and promotes its binding to the 30S ribosomal subunits. Also involved in the hydrolysis of GTP during the formation of the 70S ribosomal complex. The polypeptide is Translation initiation factor IF-2 (Rickettsia felis (strain ATCC VR-1525 / URRWXCal2) (Rickettsia azadi)).